The primary structure comprises 180 residues: Prothoracicotropic hormone (180 aa).

The first 15 residues, 1–15 (MKLLILCVMVHGLLA), serve as a signal peptide directing secretion. Residues 16-64 (EGPGQVLWKEQVVAPEFLLDDREDIASNRNAFFYEDKRSFRPEGLGEQV) constitute a propeptide that is removed on maturation. 2 disulfide bridges follow: cysteine 88-cysteine 123 and cysteine 111-cysteine 175.

Homodimer; disulfide-linked.

It is found in the secreted. In terms of biological role, PTTH is a brain secretory polypeptide of insects which stimulates the prothoracic glands to produce and release ecdysone, the steroid essential to insect development. The chain is Prothoracicotropic hormone from Camponotus floridanus (Florida carpenter ant).